Reading from the N-terminus, the 380-residue chain is DNA replication and repair protein RecF (380 aa).

Residue 30–37 (GNNAQGKS) coordinates ATP.

The protein belongs to the RecF family.

It localises to the cytoplasm. Its function is as follows. The RecF protein is involved in DNA metabolism; it is required for DNA replication and normal SOS inducibility. RecF binds preferentially to single-stranded, linear DNA. It also seems to bind ATP. The polypeptide is DNA replication and repair protein RecF (Rippkaea orientalis (strain PCC 8801 / RF-1) (Cyanothece sp. (strain PCC 8801))).